Here is a 912-residue protein sequence, read N- to C-terminus: Coatomer subunit beta (912 aa).

10 HEAT repeats span residues 59–96, 100–135, 136–172, 244–281, 300–337, 339–375, 397–434, 441–479, 550–575, and 576–612; these read PIPQ…THLG, SEMI…REAE, VLEP…HFDY, SERS…APTA, NVKM…PNID, CKKV…KEFD, EVLG…TYPS, KKLI…AMTS, LKAQ…TSKS, and AYER…YLKY.

As to quaternary structure, oligomeric complex that consists of at least the alpha, beta, beta', gamma, delta, epsilon and zeta subunits.

Its subcellular location is the cytoplasm. The protein resides in the golgi apparatus membrane. It is found in the cytoplasmic vesicle. It localises to the COPI-coated vesicle membrane. Functionally, the coatomer is a cytosolic protein complex that binds to dilysine motifs and reversibly associates with Golgi non-clathrin-coated vesicles, which further mediate biosynthetic protein transport from the ER, via the Golgi up to the trans Golgi network. Coatomer complex is required for budding from Golgi membranes, and is essential for the retrograde Golgi-to-ER transport of dilysine-tagged proteins. In Dictyostelium discoideum (Social amoeba), this protein is Coatomer subunit beta (copb).